The primary structure comprises 563 residues: Chitinase A (563 aa).

The signal sequence occupies residues 1-23 (MRKFNKPLLALLIGSTLCSAAQA). Residues 158 to 559 (KVVGSYFVEW…NSMNASLGNS (402 aa)) form the GH18 domain. Glu-315 functions as the Proton donor in the catalytic mechanism.

The protein belongs to the glycosyl hydrolase 18 family. Chitinase class II subfamily.

It catalyses the reaction Random endo-hydrolysis of N-acetyl-beta-D-glucosaminide (1-&gt;4)-beta-linkages in chitin and chitodextrins.. The polypeptide is Chitinase A (chiA) (Serratia marcescens).